Reading from the N-terminus, the 464-residue chain is Argininosuccinate lyase (464 aa).

It belongs to the lyase 1 family. Argininosuccinate lyase subfamily.

The protein resides in the cytoplasm. It catalyses the reaction 2-(N(omega)-L-arginino)succinate = fumarate + L-arginine. The protein operates within amino-acid biosynthesis; L-arginine biosynthesis; L-arginine from L-ornithine and carbamoyl phosphate: step 3/3. This chain is Argininosuccinate lyase, found in Pseudomonas aeruginosa (strain UCBPP-PA14).